A 474-amino-acid polypeptide reads, in one-letter code: Hepatocyte nuclear factor 4-alpha (474 aa).

Residues 57–132 (SALCAICGDR…AGMKKEAVQN (76 aa)) constitute a DNA-binding region (nuclear receptor). 2 consecutive NR C4-type zinc fingers follow at residues 60–80 (CAIC…CDGC) and 96–120 (CRFS…LKKC). A phosphoserine mark is found at Ser-142 and Ser-143. Tyr-144 bears the Phosphotyrosine mark. In terms of domain architecture, NR LBD spans 147 to 377 (SSLPSINALL…NLLQEMLLGG (231 aa)). Thr-166 bears the Phosphothreonine mark. A Phosphoserine modification is found at Ser-167. Residues Lys-234 and Lys-307 each participate in a glycyl lysine isopeptide (Lys-Gly) (interchain with G-Cter in ubiquitin) cross-link. Ser-313 carries the post-translational modification Phosphoserine; by AMPK. The 9aaTAD motif lies at 368-376 (NLLQEMLLG). Residues 413–450 (SNGQMCEWPRPRGQAATPETPQPSPPSGSGSESYKLLP) form a disordered region. Phosphothreonine occurs at positions 429 and 432. The residue at position 436 (Ser-436) is a Phosphoserine. Lys-458 carries the post-translational modification N6-acetyllysine.

The protein belongs to the nuclear hormone receptor family. NR2 subfamily. Homodimerization is required for HNF4-alpha to bind to its recognition site. Interacts with CLOCK, BMAL1 and PER1. Interacts with PER2. Interacts with CRY1 and CRY2. Interacts with NR0B2/SHP; the resulting heterodimer is transcriptionally inactive. Interacts with DDX3X; this interaction disrupts the interaction between HNF4 and NR0B2 that forms inactive heterodimers and enhances the formation of active HNF4 homodimers. Post-translationally, phosphorylated on tyrosine residue(s); phosphorylation is important for its DNA-binding activity. Phosphorylation may directly or indirectly play a regulatory role in the subnuclear distribution. Phosphorylation at Ser-313 by AMPK reduces the ability to form homodimers and bind DNA. Acetylation at Lys-458 lowers transcriptional activation by about two-fold. In terms of tissue distribution, expressed in the liver, pancreas and colon in a circadian manner.

The protein resides in the nucleus. In terms of biological role, transcriptional regulator which controls the expression of hepatic genes during the transition of endodermal cells to hepatic progenitor cells, facilitatating the recruitment of RNA pol II to the promoters of target genes. Activates the transcription of CYP2C38. Represses the CLOCK-BMAL1 transcriptional activity and is essential for circadian rhythm maintenance and period regulation in the liver and colon cells. The polypeptide is Hepatocyte nuclear factor 4-alpha (Hnf4a) (Mus musculus (Mouse)).